The sequence spans 316 residues: Bifunctional protein FolD (316 aa).

Residues 165–167 (GKS) and Ile-231 contribute to the NADP(+) site.

This sequence belongs to the tetrahydrofolate dehydrogenase/cyclohydrolase family. In terms of assembly, homodimer.

The catalysed reaction is (6R)-5,10-methylene-5,6,7,8-tetrahydrofolate + NADP(+) = (6R)-5,10-methenyltetrahydrofolate + NADPH. The enzyme catalyses (6R)-5,10-methenyltetrahydrofolate + H2O = (6R)-10-formyltetrahydrofolate + H(+). The protein operates within one-carbon metabolism; tetrahydrofolate interconversion. Catalyzes the oxidation of 5,10-methylenetetrahydrofolate to 5,10-methenyltetrahydrofolate and then the hydrolysis of 5,10-methenyltetrahydrofolate to 10-formyltetrahydrofolate. This Sphingobium chlorophenolicum protein is Bifunctional protein FolD.